The following is a 79-amino-acid chain: MVLNEEIPRHLLLTQNNDIIPKHHILILPAVDSYQKSVNDLRALTFSKFQELKHAHELRNLCVSQSRFLAIMWFGTNTN.

The protein is CATR tumorigenic conversion 1 protein (CATR1) of Homo sapiens (Human).